Consider the following 300-residue polypeptide: Cation-efflux pump FieF (300 aa).

4 consecutive transmembrane segments (helical) span residues 12-32 (AAIA…FAWW), 39-59 (ILAA…NLLV), 82-102 (AALA…LTGI), and 114-134 (PGVG…LVTF). Asp45 and Asp49 together coordinate Zn(2+). Zn(2+) contacts are provided by His153 and Asp157. The helical transmembrane segment at 164–184 (ILVALGLAWYGWHRADALFAL) threads the bilayer.

This sequence belongs to the cation diffusion facilitator (CDF) transporter (TC 2.A.4) family. FieF subfamily. In terms of assembly, homodimer.

It is found in the cell inner membrane. It carries out the reaction Zn(2+)(in) + H(+)(out) = Zn(2+)(out) + H(+)(in). The enzyme catalyses Cd(2+)(in) + H(+)(out) = Cd(2+)(out) + H(+)(in). The catalysed reaction is Fe(2+)(in) + H(+)(out) = Fe(2+)(out) + H(+)(in). Functionally, divalent metal cation transporter which exports Zn(2+), Cd(2+) and possibly Fe(2+). May be involved in zinc and iron detoxification by efflux. This is Cation-efflux pump FieF from Citrobacter koseri (strain ATCC BAA-895 / CDC 4225-83 / SGSC4696).